The following is a 56-amino-acid chain: Photosystem II reaction center protein K (56 aa).

The propeptide occupies 1 to 19; the sequence is MLNFLLQNTFVLWSNFILC. The chain crosses the membrane as a helical span at residues 35 to 55; sequence MPVIPVFFFLLAFVWQAAVSF.

This sequence belongs to the PsbK family. As to quaternary structure, PSII is composed of 1 copy each of membrane proteins PsbA, PsbB, PsbC, PsbD, PsbE, PsbF, PsbH, PsbI, PsbJ, PsbK, PsbL, PsbM, PsbT, PsbX, PsbY, PsbZ, Psb30/Ycf12, at least 3 peripheral proteins of the oxygen-evolving complex and a large number of cofactors. It forms dimeric complexes.

It localises to the plastid. It is found in the chloroplast thylakoid membrane. Its function is as follows. One of the components of the core complex of photosystem II (PSII). PSII is a light-driven water:plastoquinone oxidoreductase that uses light energy to abstract electrons from H(2)O, generating O(2) and a proton gradient subsequently used for ATP formation. It consists of a core antenna complex that captures photons, and an electron transfer chain that converts photonic excitation into a charge separation. The sequence is that of Photosystem II reaction center protein K from Welwitschia mirabilis (Tree tumbo).